The following is an 829-amino-acid chain: Sodium/hydrogen exchanger 3 (829 aa).

A signal peptide spans 1-26 (MWHRALGPGWKLLLALALTSLQGARG). The Extracellular portion of the chain corresponds to 27 to 46 (AEEEPSSDGSFQVVTFKWHH). Residues 47–69 (VQDPYIIALWILVASLAKIVFHL) traverse the membrane as a helical segment. Topologically, residues 70 to 77 (SHKVTSIV) are cytoplasmic. A helical membrane pass occupies residues 78-97 (PESALLIVLGLVLGGIVWAA). Residues 98–106 (DHIASFTLT) are Extracellular-facing. A helical transmembrane segment spans residues 107-124 (PTLFFFYLLPPIVLDAGY). The Cytoplasmic segment spans residues 125–127 (FMP). Residues 128–163 (NRLFFGNLGTILLYAVIGTIWNAATTGLSLYGVFLS) traverse the membrane as a helical segment. A 1,2-diacyl-sn-glycero-3-phospho-(1D-myo-inositol) is bound by residues glycine 133, glycine 136, and threonine 137. Residues 164-176 (GLMGELKIGLLDF) lie on the Extracellular side of the membrane. The chain crosses the membrane as a helical span at residues 177-198 (LLFGSLIAAVDPVAVLAVFEEV). Residues 199–200 (HV) are Cytoplasmic-facing. The chain crosses the membrane as a helical span at residues 201 to 232 (NEVLFIIVFGESLLNDAVTVVLYNVFESFVTL). The Extracellular portion of the chain corresponds to 233–239 (GGDAVTG). A helical transmembrane segment spans residues 240–274 (VDCVKGIVSFFVVSLGGTLVGVIFAFLLSLVTRFT). Residues 275 to 276 (KH) are Cytoplasmic-facing. Residues 277 to 299 (VRIIEPGFVFVISYLSYLTSEML) traverse the membrane as a helical segment. Over 300–301 (SL) the chain is Extracellular. The chain crosses the membrane as a helical span at residues 302 to 318 (SSILAITFCGICCQKYV). The Cytoplasmic portion of the chain corresponds to 319-325 (KANISEQ). Residues 326 to 354 (SATTVRYTMKMLASGAETIIFMFLGISAV) form a helical membrane-spanning segment. At 355-362 (NPDIWTWN) the chain is on the extracellular side. A helical transmembrane segment spans residues 363–384 (TAFVLLTLVFISVYRAIGVVLQ). Over 385 to 397 (TWILNRYRMVQLE) the chain is Cytoplasmic. An a 1,2-diacyl-sn-glycero-3-phospho-(1D-myo-inositol)-binding site is contributed by methionine 393. Residues 398–421 (TIDQVVMSYGGLRGAVAYALVVLL) form a helical membrane-spanning segment. At 422-428 (DEKKVKE) the chain is on the extracellular side. A helical membrane pass occupies residues 429-462 (KNLFVSTTLIVVFFTVIFQGLTIKPLVQWLKVKR). Over 463–829 (SEHREPKLNE…QPAAPESTHM (367 aa)) the chain is Cytoplasmic. Glutamine 492, isoleucine 493, and histidine 495 together coordinate a 1,2-diacyl-sn-glycero-3-phospho-(1D-myo-inositol). Residues serine 550 and serine 558 each carry the phosphoserine modification. Positions 571–585 (RPSTVEASVSYFLRE) are interaction with EZR. The interaction with NHERF4 stretch occupies residues 586 to 663 (NVSAVCLDMQ…RKRLESFKSA (78 aa)). The segment at 587-691 (VSAVCLDMQS…AQKRRNSSIP (105 aa)) is interaction with AHCYL1. Phosphoserine occurs at positions 588 and 603. Serine 659 carries the phosphoserine; by SGK1 modification. Over residues 677–687 (YKRERAQKRRN) the composition is skewed to basic residues. The interval 677–696 (YKRERAQKRRNSSIPNGKLP) is disordered. Phosphoserine occurs at positions 714, 805, and 808.

Belongs to the monovalent cation:proton antiporter 1 (CPA1) transporter (TC 2.A.36) family. In terms of assembly, homodimer. Found in the forms of complex and dynamic macromolecular complexes. Binds NHERF1 and NHERF2. Interacts with CHP1; this interaction increases trafficking and activity of SLC9A3 at the plasma membrane. Interacts with CHP2 and SHANK2. Interacts with PDZK1 (via C-terminal PDZ domain). Interacts with NHERF4 and interactions decrease in response to elevated calcium ion levels. Interacts with AHCYL1; the interaction is required for SLC9A3 activity. Interacts with EZR; interaction targets SLC9A3 to the apical membrane. Interacts with SNX27 (via PDZ domains); directs SLC9A3 membrane insertion from early endosomes to the plasma membrane. Phosphorylated by PKA, which inhibits activity. Phosphorylation at Ser-659 by SGK1 is associated with increased abundance at the cell membrane. Phosphorylation at Ser-714 by CSNK2A1 regulates SLC9A3 activity through the formation of multiple signaling complexes.

Its subcellular location is the apical cell membrane. It is found in the cell membrane. The protein localises to the recycling endosome membrane. It localises to the early endosome membrane. It carries out the reaction Na(+)(in) + H(+)(out) = Na(+)(out) + H(+)(in). Its activity is regulated as follows. Seems to switch between active and inactive modes in response to various stimuli. Activated directly or indirectly by membrane phosphatidylinositol (PIs). Regulated by a variety of auxiliary proteins, which facilitate the maturation, cell surface expression and function of the transporter. Inhibited specifically by the drug tenapanor. Plasma membrane Na(+)/H(+) antiporter. Exchanges intracellular H(+) ions for extracellular Na(+) in 1:1 stoichiometry, playing a key role in salt and fluid absorption and pH homeostasis. Major apical Na(+)/H(+) exchanger in kidney and intestine playing an important role in renal and intestine Na(+) absorption and blood pressure regulation. In Mus musculus (Mouse), this protein is Sodium/hydrogen exchanger 3.